The primary structure comprises 61 residues: U-poneritoxin(01)-Om5b (61 aa).

A signal peptide spans 1-23; it reads MKLSALSLAFAIILMMTIMYTKA. Residues 24–41 constitute a propeptide that is removed on maturation; sequence DADASADAEADADAEAEA. Glutamine amide is present on Q59.

Belongs to the formicidae venom precursor-01 superfamily. In terms of processing, truncated sequences of this peptide have also been found in the venom. It is possible they have been cleaved in the venom. In terms of tissue distribution, expressed by the venom gland.

The protein localises to the secreted. Acidic peptide with potent hemolytic activities. It also shows low antimicrobial activities against E.coli (MIC=50uM), as well as histamine-releasing activity (28.3% at 10 uM). Does not have activity against S.aureus, and S.cerevisiae. This Odontomachus monticola (Trap-jaw ant) protein is U-poneritoxin(01)-Om5b.